Here is a 229-residue protein sequence, read N- to C-terminus: Large ribosomal subunit protein uL1 (229 aa).

The protein belongs to the universal ribosomal protein uL1 family. Part of the 50S ribosomal subunit.

Binds directly to 23S rRNA. The L1 stalk is quite mobile in the ribosome, and is involved in E site tRNA release. Its function is as follows. Protein L1 is also a translational repressor protein, it controls the translation of the L11 operon by binding to its mRNA. In Streptococcus pneumoniae (strain Taiwan19F-14), this protein is Large ribosomal subunit protein uL1.